The following is a 256-amino-acid chain: Deoxyribose-phosphate aldolase (256 aa).

Asp-102 (proton donor/acceptor) is an active-site residue. The Schiff-base intermediate with acetaldehyde role is filled by Lys-165. Residue Lys-197 is the Proton donor/acceptor of the active site.

It belongs to the DeoC/FbaB aldolase family. DeoC type 2 subfamily.

It is found in the cytoplasm. The catalysed reaction is 2-deoxy-D-ribose 5-phosphate = D-glyceraldehyde 3-phosphate + acetaldehyde. Its pathway is carbohydrate degradation; 2-deoxy-D-ribose 1-phosphate degradation; D-glyceraldehyde 3-phosphate and acetaldehyde from 2-deoxy-alpha-D-ribose 1-phosphate: step 2/2. In terms of biological role, catalyzes a reversible aldol reaction between acetaldehyde and D-glyceraldehyde 3-phosphate to generate 2-deoxy-D-ribose 5-phosphate. The protein is Deoxyribose-phosphate aldolase of Shewanella sp. (strain ANA-3).